Here is a 418-residue protein sequence, read N- to C-terminus: Transmembrane protease serine 11A (418 aa).

Topologically, residues 1 to 18 (MMYRTVGFGTRSRNLKPW) are cytoplasmic. Residues 19–39 (MIAVLIVLSLTVVAVTIGLLV) form a helical; Signal-anchor for type II membrane protein membrane-spanning segment. Residues 40–418 (HFLVFDQKKE…RNWIASKTGI (379 aa)) lie on the Extracellular side of the membrane. The SEA domain maps to 47 to 164 (KKEYYHGSFK…SSVQVNAMSS (118 aa)). N153 is a glycosylation site (N-linked (GlcNAc...) asparagine). The Peptidase S1 domain occupies 187–417 (IASGVIAPKA…YRNWIASKTG (231 aa)). A disulfide bridge connects residues C212 and C228. Catalysis depends on charge relay system residues H227 and D272. N303 carries N-linked (GlcNAc...) asparagine glycosylation. Intrachain disulfides connect C337/C353 and C364/C393. The active-site Charge relay system is S368.

This sequence belongs to the peptidase S1 family. In terms of assembly, may interact with ZBTB17. In terms of tissue distribution, expressed in esophagus, liver, colon and lung. Down-regulated in esophagus cancers.

The protein resides in the membrane. In terms of biological role, probable serine protease which may play a role in cellular senescence. Overexpression inhibits cell growth and induce G1 cell cycle arrest. The polypeptide is Transmembrane protease serine 11A (TMPRSS11A) (Homo sapiens (Human)).